Consider the following 413-residue polypeptide: Multifunctional CCA protein (413 aa).

Residues Gly-8 and Arg-11 each coordinate ATP. Positions 8 and 11 each coordinate CTP. Mg(2+) contacts are provided by Asp-21 and Asp-23. ATP contacts are provided by Arg-91, Arg-137, and Arg-140. CTP is bound by residues Arg-91, Arg-137, and Arg-140. Residues 228–329 (TGVHTLMTLS…VKLFDAIDAW (102 aa)) form the HD domain.

This sequence belongs to the tRNA nucleotidyltransferase/poly(A) polymerase family. Bacterial CCA-adding enzyme type 1 subfamily. As to quaternary structure, monomer. Can also form homodimers and oligomers. Requires Mg(2+) as cofactor. Ni(2+) is required as a cofactor.

It catalyses the reaction a tRNA precursor + 2 CTP + ATP = a tRNA with a 3' CCA end + 3 diphosphate. It carries out the reaction a tRNA with a 3' CCA end + 2 CTP + ATP = a tRNA with a 3' CCACCA end + 3 diphosphate. Catalyzes the addition and repair of the essential 3'-terminal CCA sequence in tRNAs without using a nucleic acid template. Adds these three nucleotides in the order of C, C, and A to the tRNA nucleotide-73, using CTP and ATP as substrates and producing inorganic pyrophosphate. tRNA 3'-terminal CCA addition is required both for tRNA processing and repair. Also involved in tRNA surveillance by mediating tandem CCA addition to generate a CCACCA at the 3' terminus of unstable tRNAs. While stable tRNAs receive only 3'-terminal CCA, unstable tRNAs are marked with CCACCA and rapidly degraded. The chain is Multifunctional CCA protein from Salmonella choleraesuis (strain SC-B67).